Here is a 156-residue protein sequence, read N- to C-terminus: Phosphopantetheine adenylyltransferase (156 aa).

Ser9 contributes to the substrate binding site. ATP-binding positions include 9 to 10 (SF) and His17. Substrate-binding residues include Lys41, Ile74, and Lys88. Residues 89 to 91 (GLR), Glu99, and 123 to 129 (LLHVSSS) each bind ATP.

Belongs to the bacterial CoaD family. In terms of assembly, homohexamer. It depends on Mg(2+) as a cofactor.

It is found in the cytoplasm. It carries out the reaction (R)-4'-phosphopantetheine + ATP + H(+) = 3'-dephospho-CoA + diphosphate. It functions in the pathway cofactor biosynthesis; coenzyme A biosynthesis; CoA from (R)-pantothenate: step 4/5. In terms of biological role, reversibly transfers an adenylyl group from ATP to 4'-phosphopantetheine, yielding dephospho-CoA (dPCoA) and pyrophosphate. The sequence is that of Phosphopantetheine adenylyltransferase from Kocuria rhizophila (strain ATCC 9341 / DSM 348 / NBRC 103217 / DC2201).